Consider the following 408-residue polypeptide: Argininosuccinate synthase (408 aa).

ATP is bound by residues 10–18 and A37; that span reads AYSGGLDTS. Residues Y90 and S95 each contribute to the L-citrulline site. G120 provides a ligand contact to ATP. T122, N126, and D127 together coordinate L-aspartate. N126 serves as a coordination point for L-citrulline. 5 residues coordinate L-citrulline: R130, S181, S190, E266, and Y278.

Belongs to the argininosuccinate synthase family. Type 1 subfamily. In terms of assembly, homotetramer.

The protein resides in the cytoplasm. It carries out the reaction L-citrulline + L-aspartate + ATP = 2-(N(omega)-L-arginino)succinate + AMP + diphosphate + H(+). The protein operates within amino-acid biosynthesis; L-arginine biosynthesis; L-arginine from L-ornithine and carbamoyl phosphate: step 2/3. This is Argininosuccinate synthase from Laribacter hongkongensis (strain HLHK9).